A 124-amino-acid chain; its full sequence is Large ribosomal subunit protein bL12 (124 aa).

It belongs to the bacterial ribosomal protein bL12 family. In terms of assembly, homodimer. Part of the ribosomal stalk of the 50S ribosomal subunit. Forms a multimeric L10(L12)X complex, where L10 forms an elongated spine to which 2 to 4 L12 dimers bind in a sequential fashion. Binds GTP-bound translation factors.

In terms of biological role, forms part of the ribosomal stalk which helps the ribosome interact with GTP-bound translation factors. Is thus essential for accurate translation. This Cupriavidus necator (strain ATCC 17699 / DSM 428 / KCTC 22496 / NCIMB 10442 / H16 / Stanier 337) (Ralstonia eutropha) protein is Large ribosomal subunit protein bL12.